We begin with the raw amino-acid sequence, 200 residues long: Histone H1 (200 aa).

Low complexity predominate over residues 1–14 (MPPKKAPTTAKKAA). Disordered stretches follow at residues 1-20 (MPPKKAPTTAKKAASGPTHT) and 78-200 (DFIQ…NKKA). The H15 domain maps to 18–93 (THTSYRDMIK…GTSGPVKLAK (76 aa)). Residues 94–116 (KQAPAKPAPKKPATTTKTAAPKK) show a composition bias toward low complexity. Basic and acidic residues predominate over residues 120–131 (KKADKAEKAEKP). Positions 159–185 (TAAPAVVDKPKVVSVTKSGRKTTTTAK) are enriched in low complexity.

This sequence belongs to the histone H1/H5 family.

The protein localises to the nucleus. It is found in the chromosome. In terms of biological role, could act as an H1-type linker histone. The sequence is that of Histone H1 (hhoA) from Emericella nidulans (strain FGSC A4 / ATCC 38163 / CBS 112.46 / NRRL 194 / M139) (Aspergillus nidulans).